Here is a 45-residue protein sequence, read N- to C-terminus: Photosystem II reaction center protein K (45 aa).

The propeptide occupies Met1 to Ala8. A helical transmembrane segment spans residues Ile23–Gly43.

Belongs to the PsbK family. As to quaternary structure, PSII is composed of 1 copy each of membrane proteins PsbA, PsbB, PsbC, PsbD, PsbE, PsbF, PsbH, PsbI, PsbJ, PsbK, PsbL, PsbM, PsbT, PsbX, PsbY, PsbZ, Psb30/Ycf12, at least 3 peripheral proteins of the oxygen-evolving complex and a large number of cofactors. It forms dimeric complexes.

It localises to the plastid. It is found in the chloroplast thylakoid membrane. Functionally, one of the components of the core complex of photosystem II (PSII). PSII is a light-driven water:plastoquinone oxidoreductase that uses light energy to abstract electrons from H(2)O, generating O(2) and a proton gradient subsequently used for ATP formation. It consists of a core antenna complex that captures photons, and an electron transfer chain that converts photonic excitation into a charge separation. The protein is Photosystem II reaction center protein K of Pyropia yezoensis (Susabi-nori).